The following is a 591-amino-acid chain: Paxillin (591 aa).

At Met1 the chain carries N-acetylmethionine. Residue Asp2 is modified to N-acetylserine. The short motif at Asp3–Thr15 is the LD motif 1 element. Residues His17–Leu138 form a disordered region. The residue at position 31 (Tyr31) is a Phosphotyrosine; by PTK6. Residues Val45–Ser54 are compositionally biased toward pro residues. The segment covering Trp69 to Ser106 has biased composition (polar residues). 2 positions are modified to phosphoserine: Ser83 and Ser85. At Tyr88 the chain carries Phosphotyrosine. Ser106 carries the phosphoserine modification. Tyr118 bears the Phosphotyrosine; by PTK6 mark. Ser119, Ser126, and Ser130 each carry phosphoserine. Positions Pro121–Ser137 are enriched in polar residues. The residue at position 132 (Thr132) is a Phosphothreonine. 3 positions are modified to phosphoserine: Ser137, Ser140, and Ser143. Residues Glu144–Gln156 carry the LD motif 2 motif. Residues Pro159–Ser260 form a disordered region. Residue Tyr181 is modified to Phosphotyrosine. The LD motif 3 motif lies at Ser216–Val228. Ser230 is modified (phosphoserine). Positions Thr236–Ser260 are enriched in polar residues. Residue Ser244 is modified to Phosphoserine; by CDK5. The residue at position 250 (Ser250) is a Phosphoserine; by SLK. Residues Ser258, Ser261, Ser272, Ser303, Ser322, Ser332, and Ser340 each carry the phosphoserine modification. The required for binding to PARVA and ILK stretch occupies residues Ala262 to Gln315. The short motif at Glu265 to Phe276 is the LD motif 4 element. Residues Trp291 to Asp335 form a disordered region. The LD motif 5 signature appears at Gln333–Leu345. LIM zinc-binding domains lie at Gly356 to Pro415, Arg416 to Ala473, Pro474 to Ser533, and Leu534 to Cys591. Residue Ser533 is modified to Phosphoserine.

The protein belongs to the paxillin family. Interacts in vitro with VCL/vinculin as well as to the SH3 domain of SRC and, when tyrosine phosphorylated, to the SH2 domain of CRK. Interacts with GIT1. Interacts with NUDT16L1/SDOS. Interacts with PTK2/FAK1. Interacts with PTK2B/PYK2. Interacts with ASAP2. Interacts with unphosphorylated ITGA4. Interacts with RNF5. Interacts with PDCD10. Interacts with NEK3, the interaction is prolactin-dependent. Interacts with PTK6. Interacts with TGFB1I1. Interacts with SORBS1. Interacts with PARVB. Interacts (via LD motif 4) with PARVA/PARVIN. Interacts (via LD motif 4) with ILK. Interacts (via cytoplasmic domain) with CEACAM1; the interaction is phosphotyrosyl-dependent. Interacts with LIMA1; this complex stabilizes actin dynamics. Interacts with CD36 (via C-terminus). Interacts with TRIM15. Interacts with PAK4; PAK4 acts as a scaffold to suppport PAXI phosphorylation at Ser-272. As to quaternary structure, interacts strongly with PTK2/FAK1 and weakly with VCL/vinculin. In terms of assembly, interacts strongly with VCL/vinculin but only weakly with PTK2/FAK1. Post-translationally, phosphorylated by MAPK1/ERK2. Phosphorylated on tyrosine residues during integrin-mediated cell adhesion, embryonic development, fibroblast transformation and following stimulation of cells by mitogens. Phosphorylation at Ser-244 by CDK5 reduces its interaction with PTK2/FAK1 in matrix-cell focal adhesions (MCFA) during oligodendrocytes (OLs) differentiation. Phosphorylation at Tyr-31 and Tyr-118 by PTK6 promote the activation of RAC1 via CRK/CrKII, thereby promoting migration and invasion. Phosphorylation at Ser-250 by SLK is required for PXN redistribution and cell motility. Phosphorylation at Ser-272 promotes focal adhesion disassembly during cell migration.

It localises to the cytoplasm. Its subcellular location is the cytoskeleton. The protein localises to the cell junction. The protein resides in the focal adhesion. It is found in the cell cortex. Its function is as follows. Cytoskeletal protein involved in actin-membrane attachment at sites of cell adhesion to the extracellular matrix (focal adhesion). Recruits other proteins such as TRIM15 to focal adhesion. The polypeptide is Paxillin (Homo sapiens (Human)).